The following is a 160-amino-acid chain: SsrA-binding protein (160 aa).

Belongs to the SmpB family.

It is found in the cytoplasm. Functionally, required for rescue of stalled ribosomes mediated by trans-translation. Binds to transfer-messenger RNA (tmRNA), required for stable association of tmRNA with ribosomes. tmRNA and SmpB together mimic tRNA shape, replacing the anticodon stem-loop with SmpB. tmRNA is encoded by the ssrA gene; the 2 termini fold to resemble tRNA(Ala) and it encodes a 'tag peptide', a short internal open reading frame. During trans-translation Ala-aminoacylated tmRNA acts like a tRNA, entering the A-site of stalled ribosomes, displacing the stalled mRNA. The ribosome then switches to translate the ORF on the tmRNA; the nascent peptide is terminated with the 'tag peptide' encoded by the tmRNA and targeted for degradation. The ribosome is freed to recommence translation, which seems to be the essential function of trans-translation. This is SsrA-binding protein from Dinoroseobacter shibae (strain DSM 16493 / NCIMB 14021 / DFL 12).